We begin with the raw amino-acid sequence, 504 residues long: Maturase K (504 aa).

Belongs to the intron maturase 2 family. MatK subfamily.

The protein resides in the plastid. Its subcellular location is the chloroplast. Its function is as follows. Usually encoded in the trnK tRNA gene intron. Probably assists in splicing its own and other chloroplast group II introns. The chain is Maturase K from Lupinus argenteus (Silvery lupine).